We begin with the raw amino-acid sequence, 382 residues long: MNIFDEIGDKESVFKDKKYLDHRFLPDRLPHREEQIRSIAKYWVEALNGVTPPDITIYGKTGTGKTAVAKFAMKQLKEASKDCDVNIRTEYIRCTDYTTEYQVIARLCQQLGRDVPYRGWTKAEIVNTFRNMFKKNAFGQDMILMVVLDEIDILLRNDGDGLLYTLTRTDNVSILSISNYVEFKKFIKPRVRSSLRDREIVFPPYGAQQLVDILEERSKMSFKEGALDDDVIPLCAALAAKEEGDARYALDLLRTAGEIADERDSDKVLGDFVREAKDYIEHNKITDIILTLPSQQQRVLEAILYLTKRKEEITSGRLYEVYKEIAKGDSVSYRRIFDFINELEMLGLISTNTVSRGRGKGRTNIIDLQCETSLLEDSLWGV.

Residues 63–67 (TGKTA), tyrosine 205, and arginine 217 each bind ATP.

This sequence belongs to the CDC6/cdc18 family. In terms of assembly, monomer. Interacts with MCM via the WH domain. In terms of processing, autophosphorylated on a serine. Phosphorylation is stimulated by binding to MCM. Both single-stranded DNA and double-stranded DNA inhibit the phosphorylation reaction.

In terms of biological role, involved in regulation of DNA replication. May play an essential role in origin recognition. Binds to DNA, with a preference for origin-specific double-stranded sequences. Does not bind single-stranded DNA. Inhibits MCM helicase activity but does not affect its oligomeric state. This is ORC1-type DNA replication protein 1 (cdc6-1) from Methanothermobacter thermautotrophicus (strain ATCC 29096 / DSM 1053 / JCM 10044 / NBRC 100330 / Delta H) (Methanobacterium thermoautotrophicum).